The sequence spans 450 residues: MSHGHSHDGAPCGGHHGDDGAGGSRPSVNDVQALVDQLRLAGVDVSNMPNIPTAPRDMDEARSKSFQFWSTQPVPQMDETVPADVNCAIEENIALDKVRAEPFSLPAGFRWSNVDLSDEEQLNELYNLLTRNYVEDDDSMFRFDYSADFLKWALQVPGFRPEWHCGVRADSNNRLLAFIGAVPQTVRVYDKTVNMVEINFLCVHKNLRSRRVAPVLIREITRRVNVTGIFQAAFTAGIVIPKPVSVCRYYHRSLNPRKLIDVRFSHLSAKMTMARTIKLYKLPEETATRNLREMKSTDVPQVFKLLTTSLKQYSLAPVYNSEEELAHALVPKKGVVYSYVAENQNGKITDFVSFYSLPSTVMGHTTHKTIYAAYLYYYVAGSVTPKQLINDSLILANREKFDVFNALDLMHNEKIFSDLKFGKGDGNLQYYLYNWKCADMKPSQIGLVLQ.

The tract at residues 1–28 (MSHGHSHDGAPCGGHHGDDGAGGSRPSV) is disordered. Positions 67, 68, 69, 200, 201, 202, 203, 209, 211, 212, and 213 each coordinate tetradecanoyl-CoA.

Belongs to the NMT family.

It localises to the cytoplasm. The enzyme catalyses N-terminal glycyl-[protein] + tetradecanoyl-CoA = N-tetradecanoylglycyl-[protein] + CoA + H(+). Its function is as follows. Adds a myristoyl group to the N-terminal glycine residue of certain cellular proteins. The polypeptide is Probable glycylpeptide N-tetradecanoyltransferase (nmt-1) (Caenorhabditis elegans).